The primary structure comprises 370 residues: Cytochrome b (370 aa).

Transmembrane regions (helical) follow at residues 25–45, 69–90, 105–125, and 170–190; these read FGSMLIACSTLQVLTGFFLAV, WLMQNLHAIGASMFFICIYIHI, WLSGTTLLIMLMATAFFGYVL, and FFALHFILPFGIISMSSLHVM. 2 residues coordinate heme b: histidine 75 and histidine 89. Heme b is bound by residues histidine 174 and histidine 188. A ubiquinone is bound at residue histidine 193. 4 helical membrane passes run 218–238, 280–300, 312–332, and 339–358; these read YKDLLMLAAMTTLLLLIVSFS, LGGALALTMSIVILLTVPFTH, FMQMTFWLFAATFMVITWTAT, and FTLIGQAASMIYFLFFISNP.

Belongs to the cytochrome b family. The cytochrome bc1 complex contains 3 respiratory subunits (MT-CYB, CYC1 and UQCRFS1), 2 core proteins (UQCRC1 and UQCRC2) and probably 6 low-molecular weight proteins. Heme b is required as a cofactor.

It localises to the mitochondrion inner membrane. Component of the ubiquinol-cytochrome c reductase complex (complex III or cytochrome b-c1 complex) that is part of the mitochondrial respiratory chain. The b-c1 complex mediates electron transfer from ubiquinol to cytochrome c. Contributes to the generation of a proton gradient across the mitochondrial membrane that is then used for ATP synthesis. In Eunectes notaeus (Yellow anaconda), this protein is Cytochrome b (MT-CYB).